Reading from the N-terminus, the 391-residue chain is Putative 8-amino-7-oxononanoate synthase (391 aa).

Substrate contacts are provided by arginine 22 and histidine 135. Pyridoxal 5'-phosphate is bound by residues serine 183, 208 to 211 (DDAH), and 239 to 242 (TLSK). Lysine 242 is subject to N6-(pyridoxal phosphate)lysine. Threonine 358 is a binding site for substrate.

It belongs to the class-II pyridoxal-phosphate-dependent aminotransferase family. BioF subfamily. In terms of assembly, homodimer. The cofactor is pyridoxal 5'-phosphate.

It carries out the reaction 6-carboxyhexanoyl-[ACP] + L-alanine + H(+) = (8S)-8-amino-7-oxononanoate + holo-[ACP] + CO2. It functions in the pathway cofactor biosynthesis; biotin biosynthesis. In terms of biological role, catalyzes the decarboxylative condensation of pimeloyl-[acyl-carrier protein] and L-alanine to produce 8-amino-7-oxononanoate (AON), [acyl-carrier protein], and carbon dioxide. This is Putative 8-amino-7-oxononanoate synthase (bioF) from Thermosynechococcus vestitus (strain NIES-2133 / IAM M-273 / BP-1).